Reading from the N-terminus, the 249-residue chain is PF03932 family protein CutC (249 aa).

Belongs to the CutC family.

It is found in the cytoplasm. The protein is PF03932 family protein CutC of Bacteroides thetaiotaomicron (strain ATCC 29148 / DSM 2079 / JCM 5827 / CCUG 10774 / NCTC 10582 / VPI-5482 / E50).